Reading from the N-terminus, the 133-residue chain is Capsid protein (133 aa).

Belongs to the Leviviricetes capsid protein family. Homodimer. The capsid protein dimer binds to the viral RNA via an operator hairpin, but also many other RNA sequences in the viral genome.

Its subcellular location is the virion. Capsid protein self-assembles to form an icosahedral capsid with a T=3 symmetry, about 26 nm in diameter, and consisting of 89 capsid proteins dimers (178 capsid proteins). Involved in viral genome encapsidation through the interaction between a capsid protein dimer and the multiple packaging signals present in the RNA genome. Binding of the capsid proteins to the viral RNA induces a conformational change required for efficient T=3 shell formation. The capsid also contains 1 copy of the A2 maturation protein. Its function is as follows. Acts as a translational repressor of viral replicase synthesis late in infection. This latter function is the result of capsid protein interaction with an RNA hairpin which contains the replicase ribosome-binding site. The sequence is that of Capsid protein from Escherichia coli.